Consider the following 38-residue polypeptide: Large ribosomal subunit protein bL36 (38 aa).

Belongs to the bacterial ribosomal protein bL36 family.

This is Large ribosomal subunit protein bL36 from Pelodictyon phaeoclathratiforme (strain DSM 5477 / BU-1).